A 170-amino-acid chain; its full sequence is MALLPILEFPDPRLRTKAVPVDAAEVVSPAFQTLLDDMFQTMYEAPGIGLAASQVDVHKRFMVIDVSEEKDAPQVFINPEIVTRQGEQVYQEGCLSVPGIFADVSRADAITVRYLDRQGQPQELSTDGLLAVCIQHEMDHLDGKLFVDYLSPLKREMVRKKLAKLRKHVA.

The Fe cation site is built by Cys-94 and His-136. The active site involves Glu-137. Residue His-140 coordinates Fe cation.

Belongs to the polypeptide deformylase family. Fe(2+) is required as a cofactor.

The catalysed reaction is N-terminal N-formyl-L-methionyl-[peptide] + H2O = N-terminal L-methionyl-[peptide] + formate. In terms of biological role, removes the formyl group from the N-terminal Met of newly synthesized proteins. Requires at least a dipeptide for an efficient rate of reaction. N-terminal L-methionine is a prerequisite for activity but the enzyme has broad specificity at other positions. The sequence is that of Peptide deformylase 2 from Xanthomonas campestris pv. campestris (strain ATCC 33913 / DSM 3586 / NCPPB 528 / LMG 568 / P 25).